The following is a 425-amino-acid chain: Dihydroorotase (425 aa).

Residues His61 and His63 each contribute to the Zn(2+) site. Substrate-binding positions include 63-65 (HLR) and Asn95. The Zn(2+) site is built by Asp153, His180, and His233. Position 279 (Asn279) interacts with substrate. Residue Asp306 participates in Zn(2+) binding. Asp306 is a catalytic residue. His310 is a binding site for substrate.

It belongs to the metallo-dependent hydrolases superfamily. DHOase family. Class I DHOase subfamily. Zn(2+) serves as cofactor.

The catalysed reaction is (S)-dihydroorotate + H2O = N-carbamoyl-L-aspartate + H(+). Its pathway is pyrimidine metabolism; UMP biosynthesis via de novo pathway; (S)-dihydroorotate from bicarbonate: step 3/3. Catalyzes the reversible cyclization of carbamoyl aspartate to dihydroorotate. The protein is Dihydroorotase of Geotalea daltonii (strain DSM 22248 / JCM 15807 / FRC-32) (Geobacter daltonii).